The sequence spans 471 residues: UDP-N-acetylmuramate--L-alanine ligase (471 aa).

112-118 (GTHGKTT) contributes to the ATP binding site.

The protein belongs to the MurCDEF family.

The protein localises to the cytoplasm. It catalyses the reaction UDP-N-acetyl-alpha-D-muramate + L-alanine + ATP = UDP-N-acetyl-alpha-D-muramoyl-L-alanine + ADP + phosphate + H(+). It functions in the pathway cell wall biogenesis; peptidoglycan biosynthesis. Cell wall formation. The chain is UDP-N-acetylmuramate--L-alanine ligase from Aromatoleum aromaticum (strain DSM 19018 / LMG 30748 / EbN1) (Azoarcus sp. (strain EbN1)).